A 196-amino-acid chain; its full sequence is Ribonuclease HII (196 aa).

The RNase H type-2 domain occupies Phe15–Lys196. 3 residues coordinate a divalent metal cation: Asp21, Glu22, and Asp112.

This sequence belongs to the RNase HII family. Requires Mn(2+) as cofactor. It depends on Mg(2+) as a cofactor.

The protein resides in the cytoplasm. It catalyses the reaction Endonucleolytic cleavage to 5'-phosphomonoester.. Endonuclease that specifically degrades the RNA of RNA-DNA hybrids. The protein is Ribonuclease HII of Rickettsia bellii (strain OSU 85-389).